The following is a 355-amino-acid chain: MAEQMVFDADQVTAEVAEGIEKIQNASNLEELKAIKTTYAGADSAMTKASKAIGSLPADQKKEAGKLMGKLRADFGRAYGPKEVELKEAAEKAALAAETVDMTLPVSRKPLGARHPLPKLMEDVEDFFISMGWQISSGPEIEAEWYNFDSLNFGPDHPARQMQDTFYVKGNQAKDAAGFVGSNMVVRTQTSSDQVRALLTRGVPLYIASPGRVFRTDELDATHTPVFHQCEALAVDKHLTMADLKGVLDKLAVAMFGPEAKTRLRPSYFPFTEPSAELDLWFPDKKGGPGWLEWGGCGMVNPNVLKSAGIDPDVYTGFAFGVGMERTLLLRSDINDMHDLVEGDVRFAEQFVMGE.

Mg(2+) is bound at residue Glu-273.

Belongs to the class-II aminoacyl-tRNA synthetase family. Phe-tRNA synthetase alpha subunit type 1 subfamily. Tetramer of two alpha and two beta subunits. Mg(2+) serves as cofactor.

It localises to the cytoplasm. It catalyses the reaction tRNA(Phe) + L-phenylalanine + ATP = L-phenylalanyl-tRNA(Phe) + AMP + diphosphate + H(+). This chain is Phenylalanine--tRNA ligase alpha subunit, found in Bifidobacterium longum (strain NCC 2705).